Consider the following 44-residue polypeptide: MRDIKTYLSVAPVLTTLWFGSLAGLLIEINRLFPDALTFSFFSF.

A helical transmembrane segment spans residues 7 to 27 (YLSVAPVLTTLWFGSLAGLLI).

This sequence belongs to the PsaJ family.

The protein resides in the plastid. The protein localises to the chloroplast thylakoid membrane. Its function is as follows. May help in the organization of the PsaE and PsaF subunits. The protein is Photosystem I reaction center subunit IX of Drimys granadensis.